Reading from the N-terminus, the 517-residue chain is Crotonobetaine/carnitine--CoA ligase (517 aa).

It belongs to the ATP-dependent AMP-binding enzyme family.

The enzyme catalyses 4-(trimethylamino)butanoate + ATP + CoA = 4-(trimethylamino)butanoyl-CoA + AMP + diphosphate. It carries out the reaction crotonobetaine + ATP + CoA = crotonobetainyl-CoA + AMP + diphosphate. The catalysed reaction is (R)-carnitine + ATP + CoA = (R)-carnitinyl-CoA + AMP + diphosphate. It functions in the pathway amine and polyamine metabolism; carnitine metabolism. Functionally, catalyzes the transfer of CoA to carnitine, generating the initial carnitinyl-CoA needed for the CaiB reaction cycle. Also has activity toward crotonobetaine and gamma-butyrobetaine. This chain is Crotonobetaine/carnitine--CoA ligase, found in Salmonella choleraesuis (strain SC-B67).